The sequence spans 386 residues: Putative membrane-bound transacylase BcsY (386 aa).

Helical transmembrane passes span 37-57, 91-111, 118-138, 156-176, 181-201, 237-257, 258-278, 290-310, 322-342, and 362-382; these read LAIA…FIGV, LLPA…WWVL, IALN…SGHV, LSLE…LPLT, LVLS…WHTG, AVYA…PLSY, ACPS…IMLP, LSPL…GIVV, AMMA…YVLV, and AALL…ISHV.

The protein belongs to the acyltransferase 3 family.

It is found in the cell inner membrane. The protein operates within glycan metabolism; bacterial cellulose biosynthesis. Functionally, may acylate a glucose moiety into cellulose fibrils, in cooperation with BcsABII and BcsCII. The chain is Putative membrane-bound transacylase BcsY (bcsY) from Komagataeibacter xylinus (Gluconacetobacter xylinus).